Reading from the N-terminus, the 312-residue chain is Malate dehydrogenase (312 aa).

NAD(+) contacts are provided by residues 12–17 and D36; that span reads GAGFTG. Substrate is bound by residues R87 and R93. NAD(+) contacts are provided by residues N100 and 123–125; that span reads LTN. N125 is a substrate binding site. S149 is subject to Phosphoserine. R156 provides a ligand contact to substrate. The Proton acceptor role is filled by H180.

Belongs to the LDH/MDH superfamily. MDH type 3 family.

It carries out the reaction (S)-malate + NAD(+) = oxaloacetate + NADH + H(+). Its function is as follows. Catalyzes the reversible oxidation of malate to oxaloacetate. This Bacillus cytotoxicus (strain DSM 22905 / CIP 110041 / 391-98 / NVH 391-98) protein is Malate dehydrogenase.